We begin with the raw amino-acid sequence, 295 residues long: Pyridoxal 5'-phosphate synthase subunit PdxS (295 aa).

Aspartate 25 is a D-ribose 5-phosphate binding site. Lysine 82 acts as the Schiff-base intermediate with D-ribose 5-phosphate in catalysis. Glycine 154 is a D-ribose 5-phosphate binding site. Arginine 166 serves as a coordination point for D-glyceraldehyde 3-phosphate. D-ribose 5-phosphate is bound by residues glycine 215 and 236-237 (GS).

The protein belongs to the PdxS/SNZ family. As to quaternary structure, in the presence of PdxT, forms a dodecamer of heterodimers.

It carries out the reaction aldehydo-D-ribose 5-phosphate + D-glyceraldehyde 3-phosphate + L-glutamine = pyridoxal 5'-phosphate + L-glutamate + phosphate + 3 H2O + H(+). Its pathway is cofactor biosynthesis; pyridoxal 5'-phosphate biosynthesis. In terms of biological role, catalyzes the formation of pyridoxal 5'-phosphate from ribose 5-phosphate (RBP), glyceraldehyde 3-phosphate (G3P) and ammonia. The ammonia is provided by the PdxT subunit. Can also use ribulose 5-phosphate and dihydroxyacetone phosphate as substrates, resulting from enzyme-catalyzed isomerization of RBP and G3P, respectively. The sequence is that of Pyridoxal 5'-phosphate synthase subunit PdxS from Listeria welshimeri serovar 6b (strain ATCC 35897 / DSM 20650 / CCUG 15529 / CIP 8149 / NCTC 11857 / SLCC 5334 / V8).